The primary structure comprises 79 residues: MKCATLFLVLSMVVLMAEPGDAFFHHIFRGIVHVGKSIHKLVTGGKAQQDQQDQQYQQDQQDQQAEQYQRFNRERAAFD.

Residues 1-22 form the signal peptide; the sequence is MKCATLFLVLSMVVLMAEPGDA. Gly44 is modified (glycine amide). The propeptide occupies 47–79; that stretch reads AQQDQQDQQYQQDQQDQQAEQYQRFNRERAAFD. Positions 48-67 are disordered; sequence QQDQQDQQYQQDQQDQQAEQ.

The protein belongs to the pleurocidin family.

It localises to the secreted. The sequence is that of Dicentracin from Dicentrarchus labrax (European seabass).